Consider the following 135-residue polypeptide: Interleukin-4 (135 aa).

The signal sequence occupies residues 1 to 24 (MGLTYQLIPVLVCLLVCTSHLVHG). 3 disulfide bridges follow: C27–C135, C48–C85, and C70–C105. Residue N62 is glycosylated (N-linked (GlcNAc...) asparagine).

The protein belongs to the IL-4/IL-13 family.

It is found in the secreted. Its function is as follows. Participates in at least several B-cell activation processes as well as of other cell types. It is a costimulator of DNA-synthesis. It induces the expression of class II MHC molecules on resting B-cells. It enhances both secretion and cell surface expression of IgE and IgG1. It also regulates the expression of the low affinity Fc receptor for IgE (CD23) on both lymphocytes and monocytes. Positively regulates IL31RA expression in macrophages. Stimulates autophagy in dendritic cells by interfering with mTORC1 signaling and through the induction of RUFY4. In Bubalus bubalis (Domestic water buffalo), this protein is Interleukin-4 (IL4).